Reading from the N-terminus, the 231-residue chain is MTESSIHDPLTIRRLYGRQQGHSLRPKQAELVETLLPQLEITTEQAVSATDLFGDDRPLEFEIGFGKGEHLAGQAMMRPDHGFIGCEPFLDGVVGLLTHIDNNQIKNIRLHRGDALDILEQLPDGCLDRAYLLHPDPWPKARHAKRRFMNHGPIGLIARKMKKGGEFRFGTDHPIYCHWAMMIMGQRPDFEWLAQTPRDFLQRPEDWPQTRYEKKAREKGHEVWYFRYRRV.

Positions 62, 87, 114, and 136 each coordinate S-adenosyl-L-methionine. Residue D136 is part of the active site. Residues K140, D172, and 210–213 (TRYE) contribute to the substrate site.

This sequence belongs to the class I-like SAM-binding methyltransferase superfamily. TrmB family.

The enzyme catalyses guanosine(46) in tRNA + S-adenosyl-L-methionine = N(7)-methylguanosine(46) in tRNA + S-adenosyl-L-homocysteine. Its pathway is tRNA modification; N(7)-methylguanine-tRNA biosynthesis. In terms of biological role, catalyzes the formation of N(7)-methylguanine at position 46 (m7G46) in tRNA. The polypeptide is tRNA (guanine-N(7)-)-methyltransferase (Zymomonas mobilis subsp. mobilis (strain ATCC 31821 / ZM4 / CP4)).